Consider the following 182-residue polypeptide: Large ribosomal subunit protein bL19m (182 aa).

A mitochondrion-targeting transit peptide spans 1 to 21 (MFNAKHFFNLGLGFQWLQKRG).

It belongs to the bacterial ribosomal protein bL19 family. Component of the mitochondrial large ribosomal subunit (mt-LSU). Mature yeast 74S mitochondrial ribosomes consist of a small (37S) and a large (54S) subunit. The 37S small subunit contains a 15S ribosomal RNA (15S mt-rRNA) and at least 32 different proteins. The 54S large subunit contains a 21S rRNA (21S mt-rRNA) and at least 45 different proteins.

Its subcellular location is the mitochondrion. In terms of biological role, component of the mitochondrial ribosome (mitoribosome), a dedicated translation machinery responsible for the synthesis of mitochondrial genome-encoded proteins, including at least some of the essential transmembrane subunits of the mitochondrial respiratory chain. The mitoribosomes are attached to the mitochondrial inner membrane and translation products are cotranslationally integrated into the membrane. bL19m is essential for respiration. This chain is Large ribosomal subunit protein bL19m (img1), found in Schizosaccharomyces pombe (strain 972 / ATCC 24843) (Fission yeast).